The following is a 462-amino-acid chain: 7-hydroxymethyl chlorophyll a reductase, chloroplastic (462 aa).

Residues 1–20 constitute a chloroplast transit peptide; it reads MITVVTSRLSLLPPVFSVVN.

The protein belongs to the FrhB family. Interacts with SGR1, the chlorophyll catabolic enzymes (CCEs) NYC1, NOL and RCCR, and the LHCII complex. Part of a SGR1-CCE-LHCII complex, which acts in chlorophyll breakdown. FAD is required as a cofactor. It depends on iron-sulfur cluster as a cofactor.

The protein localises to the plastid. It localises to the chloroplast. It carries out the reaction chlorophyll a + 2 oxidized [2Fe-2S]-[ferredoxin] + H2O = 7(1)-hydroxychlorophyll a + 2 reduced [2Fe-2S]-[ferredoxin] + 2 H(+). Probable iron-sulfur flavoprotein that converts 7-hydroxymethyl chlorophyll a to chlorophyll a using ferredoxin as a reducing equivalent. Catalyzes the reduction of a hydroxymethyl group to a methyl group. Belongs to the chlorophyll catabolic enzymes (CCEs). The protein is 7-hydroxymethyl chlorophyll a reductase, chloroplastic (HCAR) of Arabidopsis thaliana (Mouse-ear cress).